The chain runs to 425 residues: Glutamyl-tRNA reductase (425 aa).

Substrate is bound by residues 49 to 52 (TCNR), Ser-107, 112 to 114 (EPQ), and Gln-118. Cys-50 (nucleophile) is an active-site residue. Residue 187-192 (GAGETI) participates in NADP(+) binding.

The protein belongs to the glutamyl-tRNA reductase family. Homodimer.

It carries out the reaction (S)-4-amino-5-oxopentanoate + tRNA(Glu) + NADP(+) = L-glutamyl-tRNA(Glu) + NADPH + H(+). Its pathway is porphyrin-containing compound metabolism; protoporphyrin-IX biosynthesis; 5-aminolevulinate from L-glutamyl-tRNA(Glu): step 1/2. In terms of biological role, catalyzes the NADPH-dependent reduction of glutamyl-tRNA(Glu) to glutamate 1-semialdehyde (GSA). In Pseudomonas syringae pv. syringae (strain B728a), this protein is Glutamyl-tRNA reductase.